A 427-amino-acid polypeptide reads, in one-letter code: Enolase (427 aa).

Q163 contributes to the (2R)-2-phosphoglycerate binding site. E205 (proton donor) is an active-site residue. Positions 242, 285, and 312 each coordinate Mg(2+). Residues K337, R366, S367, and K388 each coordinate (2R)-2-phosphoglycerate. The active-site Proton acceptor is K337.

Belongs to the enolase family. Requires Mg(2+) as cofactor.

The protein localises to the cytoplasm. It localises to the secreted. The protein resides in the cell surface. The enzyme catalyses (2R)-2-phosphoglycerate = phosphoenolpyruvate + H2O. The protein operates within carbohydrate degradation; glycolysis; pyruvate from D-glyceraldehyde 3-phosphate: step 4/5. Catalyzes the reversible conversion of 2-phosphoglycerate (2-PG) into phosphoenolpyruvate (PEP). It is essential for the degradation of carbohydrates via glycolysis. The polypeptide is Enolase (Azorhizobium caulinodans (strain ATCC 43989 / DSM 5975 / JCM 20966 / LMG 6465 / NBRC 14845 / NCIMB 13405 / ORS 571)).